Reading from the N-terminus, the 354-residue chain is NADH-quinone oxidoreductase subunit H (354 aa).

8 consecutive transmembrane segments (helical) span residues 25 to 45, 91 to 111, 126 to 146, 170 to 190, 205 to 225, 253 to 273, 290 to 310, and 330 to 350; these read LVRI…LILW, WLYL…WAVI, LLYA…AGWA, MGFA…SEIV, FLSW…ISGI, MAFA…SALA, FIPG…VFIW, and VFLP…MSPL.

This sequence belongs to the complex I subunit 1 family. As to quaternary structure, NDH-1 is composed of 14 different subunits. Subunits NuoA, H, J, K, L, M, N constitute the membrane sector of the complex.

It localises to the cell inner membrane. It carries out the reaction a quinone + NADH + 5 H(+)(in) = a quinol + NAD(+) + 4 H(+)(out). Its function is as follows. NDH-1 shuttles electrons from NADH, via FMN and iron-sulfur (Fe-S) centers, to quinones in the respiratory chain. The immediate electron acceptor for the enzyme in this species is believed to be ubiquinone. Couples the redox reaction to proton translocation (for every two electrons transferred, four hydrogen ions are translocated across the cytoplasmic membrane), and thus conserves the redox energy in a proton gradient. This subunit may bind ubiquinone. This is NADH-quinone oxidoreductase subunit H from Burkholderia thailandensis (strain ATCC 700388 / DSM 13276 / CCUG 48851 / CIP 106301 / E264).